The sequence spans 475 residues: Protein translocase subunit SecD (475 aa).

The next 6 membrane-spanning stretches (helical) occupy residues 7–27 (LLITVTLLAFSVWALWPSLKF), 313–333 (KGFMSSLIGIVLVFLFMFIYY), 338–358 (LIADVALSLNLIILMAIMAYL), 364–384 (LPGVAGIALTLAMSVDANVLI), 410–430 (FWTIFDANFTTLIAALFLFQF), and 437–457 (GFAVTLSIGLIVSMFTAVTVT).

It belongs to the SecD/SecF family. SecD subfamily. Forms a complex with SecF. Part of the essential Sec protein translocation apparatus which comprises SecA, SecYEG and auxiliary proteins SecDF. Other proteins may also be involved.

The protein resides in the cell inner membrane. Its function is as follows. Part of the Sec protein translocase complex. Interacts with the SecYEG preprotein conducting channel. SecDF uses the proton motive force (PMF) to complete protein translocation after the ATP-dependent function of SecA. This is Protein translocase subunit SecD from Endomicrobium trichonymphae.